The primary structure comprises 241 residues: Ribose-5-phosphate isomerase A (241 aa).

Substrate-binding positions include 28–31, 83–86, and 96–99; these read TGST, DGAD, and KGGG. Catalysis depends on Glu105, which acts as the Proton acceptor. Lys123 contacts substrate.

It belongs to the ribose 5-phosphate isomerase family. In terms of assembly, homodimer.

The enzyme catalyses aldehydo-D-ribose 5-phosphate = D-ribulose 5-phosphate. The protein operates within carbohydrate degradation; pentose phosphate pathway; D-ribose 5-phosphate from D-ribulose 5-phosphate (non-oxidative stage): step 1/1. Catalyzes the reversible conversion of ribose-5-phosphate to ribulose 5-phosphate. The sequence is that of Ribose-5-phosphate isomerase A from Bradyrhizobium diazoefficiens (strain JCM 10833 / BCRC 13528 / IAM 13628 / NBRC 14792 / USDA 110).